Consider the following 173-residue polypeptide: Photosystem I assembly protein Ycf3 (173 aa).

TPR repeat units follow at residues 35 to 68, 72 to 105, and 120 to 153; these read AYVY…EESP, SETL…NSNQ, and GRTA…YPGG.

It belongs to the Ycf3 family.

Its subcellular location is the cellular thylakoid membrane. In terms of biological role, essential for the assembly of the photosystem I (PSI) complex. May act as a chaperone-like factor to guide the assembly of the PSI subunits. This chain is Photosystem I assembly protein Ycf3, found in Prochlorococcus marinus (strain MIT 9313).